Consider the following 262-residue polypeptide: Flap endonuclease Xni (262 aa).

Residue Asp105 participates in Mg(2+) binding. In terms of domain architecture, 5'-3' exonuclease spans 162-257 (ERSQFLDLMA…FRVIDSPPEK (96 aa)). Leu172, Ala173, Pro181, Ile183, and Ile186 together coordinate K(+). The interval 185–190 (GIGPKS) is interaction with DNA.

This sequence belongs to the Xni family. It depends on Mg(2+) as a cofactor. K(+) is required as a cofactor.

Has flap endonuclease activity. During DNA replication, flap endonucleases cleave the 5'-overhanging flap structure that is generated by displacement synthesis when DNA polymerase encounters the 5'-end of a downstream Okazaki fragment. The chain is Flap endonuclease Xni from Shewanella baltica (strain OS223).